We begin with the raw amino-acid sequence, 157 residues long: Ribonuclease 8 (157 aa).

Positions 1-30 (MAPARAGCCPLLLLLLLLLGLWVAEVLVSA) are cleaved as a signal peptide. Histidine 45 serves as the catalytic Proton acceptor. 4 disulfide bridges follow: cysteine 53–cysteine 96, cysteine 67–cysteine 121, cysteine 85–cysteine 136, and cysteine 92–cysteine 99. Substrate-binding positions include 68-72 (KDLNT) and lysine 93. Histidine 152 (proton donor) is an active-site residue.

It belongs to the pancreatic ribonuclease family.

Its subcellular location is the secreted. In terms of biological role, has a low ribonuclease activity. The protein is Ribonuclease 8 (RNASE8) of Pan troglodytes (Chimpanzee).